The following is an 806-amino-acid chain: LisH domain-containing protein ARMC9 (806 aa).

A LisH domain is found at 7 to 39 (YEADLLGLVKEFLNFGEFQETLECFSKECKIKG). Positions 194–230 (KLITLYKESLHNNQEQLQQLQQQLMETEHKARTYKKC) form a coiled coil. Disordered regions lie at residues 576-604 (FDESVESDDEEEEKDDEEDEDALEADLDK), 650-736 (PLQR…SPRI), and 748-806 (NSSK…SYRK). Residues 579–604 (SVESDDEEEEKDDEEDEDALEADLDK) show a composition bias toward acidic residues. Residues 655–688 (VTPSSHRAMNTVRKNSNSPSPLTNTFKSSQANKM) show a composition bias toward polar residues. Positions 689–708 (SLSSSRPPTRSGSRASSSDS) are enriched in low complexity. Residues 759-782 (EVQNATSRKTRTPTIAPQFSQSGP) show a composition bias toward polar residues. Positions 783-806 (QQTSYSSSAGSSTRSRQSTQSYRK) are enriched in low complexity.

The protein resides in the cytoplasm. It is found in the cytoskeleton. Its subcellular location is the cilium basal body. It localises to the cell projection. The protein localises to the cilium. The protein resides in the microtubule organizing center. It is found in the centrosome. Its subcellular location is the centriole. Its function is as follows. Involved in ciliogenesis. It is required for appropriate acetylation and polyglutamylation of ciliary microtubules, and regulation of cilium length. Acts as a positive regulator of hedgehog (Hh)signaling. In Xenopus laevis (African clawed frog), this protein is LisH domain-containing protein ARMC9 (armc9).